The chain runs to 385 residues: Ribosomal RNA large subunit methyltransferase G (385 aa).

The protein belongs to the methyltransferase superfamily. RlmG family.

The protein localises to the cytoplasm. The enzyme catalyses guanosine(1835) in 23S rRNA + S-adenosyl-L-methionine = N(2)-methylguanosine(1835) in 23S rRNA + S-adenosyl-L-homocysteine + H(+). Specifically methylates the guanine in position 1835 (m2G1835) of 23S rRNA. This is Ribosomal RNA large subunit methyltransferase G from Vibrio parahaemolyticus serotype O3:K6 (strain RIMD 2210633).